Consider the following 258-residue polypeptide: Cytochrome c oxidase subunit 2 (258 aa).

Residues 1 to 41 (MIVNECLFFTIALCDAAEPWQLGFQDAATPMMQGIIDLHHD) are Mitochondrial intermembrane-facing. Residues 42–58 (ILFFLILILVFVLWILV) form a helical membrane-spanning segment. Topologically, residues 59 to 82 (RALWHFYYKKNPIPQRIVHGTTIE) are mitochondrial matrix. Residues 83-104 (ILWTIFPSIILMFIAIPSFALL) form a helical membrane-spanning segment. Residues 105–258 (YSMDEVVVDP…VSNLFIPPTS (154 aa)) are Mitochondrial intermembrane-facing. Residues H187, C222, E224, C226, H230, and M233 each coordinate Cu cation. E224 serves as a coordination point for Mg(2+).

The protein belongs to the cytochrome c oxidase subunit 2 family. Component of the cytochrome c oxidase (complex IV, CIV), a multisubunit enzyme composed of a catalytic core of 3 subunits and several supernumerary subunits. The complex exists as a monomer or a dimer and forms supercomplexes (SCs) in the inner mitochondrial membrane with ubiquinol-cytochrome c oxidoreductase (cytochrome b-c1 complex, complex III, CIII). The cofactor is Cu cation.

Its subcellular location is the mitochondrion inner membrane. It carries out the reaction 4 Fe(II)-[cytochrome c] + O2 + 8 H(+)(in) = 4 Fe(III)-[cytochrome c] + 2 H2O + 4 H(+)(out). Functionally, component of the cytochrome c oxidase, the last enzyme in the mitochondrial electron transport chain which drives oxidative phosphorylation. The respiratory chain contains 3 multisubunit complexes succinate dehydrogenase (complex II, CII), ubiquinol-cytochrome c oxidoreductase (cytochrome b-c1 complex, complex III, CIII) and cytochrome c oxidase (complex IV, CIV), that cooperate to transfer electrons derived from NADH and succinate to molecular oxygen, creating an electrochemical gradient over the inner membrane that drives transmembrane transport and the ATP synthase. Cytochrome c oxidase is the component of the respiratory chain that catalyzes the reduction of oxygen to water. Electrons originating from reduced cytochrome c in the intermembrane space (IMS) are transferred via the dinuclear copper A center (CU(A)) of subunit 2 and heme A of subunit 1 to the active site in subunit 1, a binuclear center (BNC) formed by heme A3 and copper B (CU(B)). The BNC reduces molecular oxygen to 2 water molecules using 4 electrons from cytochrome c in the IMS and 4 protons from the mitochondrial matrix. The protein is Cytochrome c oxidase subunit 2 (COX2) of Oenothera berteroana (Bertero's evening primrose).